The sequence spans 61 residues: Large ribosomal subunit protein uL30 (61 aa).

The protein belongs to the universal ribosomal protein uL30 family. In terms of assembly, part of the 50S ribosomal subunit.

This Maricaulis maris (strain MCS10) (Caulobacter maris) protein is Large ribosomal subunit protein uL30.